A 780-amino-acid chain; its full sequence is Catenin beta-1 (780 aa).

Positions 34-56 (GIHSGATTTAPSLSGKGNPEDDD) are disordered. 10 ARM repeats span residues 140–179 (NYQDDAELATRAIPELTKLLNDEDQVVVNKAAVMVHQLSK), 224–263 (REGLLAIFKSGGIPALVKMLGSPVDSVLFYAITTLHNLLL), 266–305 (EGAKMAVRLAGGLQKMVALLNKTNVKFLAITTDCLQILAY), 350–389 (SSNKPAIVEAGGMQALGLHLTDPSQRLVQNCLWTLRNLSD), 399–430 (GLLGTLVQLLGSDDINVVTCAAGILSNLTCNN), 431–472 (YKNK…HLTS), 478–518 (EMAQ…NLAL), 520–561 (PANH…QFVE), 583–622 (IHNRIVIRGLNTIPLFVQLLYSPIENIQRVAAGVLCELAQ), and 624–663 (KEAAEAIEAEGATAPLTELLHSRNEGVATYAAAVLFRMSE). Basic and acidic residues predominate over residues 735–744 (EHEMAGHHPG). The disordered stretch occupies residues 735–770 (EHEMAGHHPGPDYPVDGLPDLGHTQDLIDGLPPGDS).

The protein belongs to the beta-catenin family. In terms of assembly, interacts with adnpa. Interacts with cdh1 during oogenesis and in the unfertilized egg. Interacts with ctnna1 and cdh2. Post-translationally, phosphorylation by gsk3b promotes ubiquitination and subsequent degradation by the proteasome. Ubiquitinated when phosphorylated by gsk3b, leading to its degradation. Expressed in the successional lamina, also expressed in both the epithelial and mesenchymal cells of the developing replacement tooth (at protein level). Expressed in the enamel organ as well as in the inner and outer dental epithelium during replacement tooth morphogenesis (at protein level). Expressed in the differentiated, polarized odontoblasts that line the dentine matrix as well as in the inner and outer dental epithelium during tooth cytodifferentiation (at protein level). Expressed in the reduced enamel organ, odontoblasts and weakly at the center of the dental papilla of the functional tooth as well as in the epithelial crypts surrounding the functional tooth (at protein level). Expressed in the liver (at protein level). Expressed at intercalated disks in the heart (at protein level). Expressed in the ovary.

Its subcellular location is the cytoplasm. The protein resides in the nucleus. It localises to the cell membrane. It is found in the cell junction. The protein localises to the adherens junction. In terms of biological role, key downstream component of the canonical Wnt signaling pathway. In the absence of Wnt, forms a complex with axin1, axin2, apc, csnk1a1 and gsk3b that promotes phosphorylation on N-terminal Ser and Thr residues and ubiquitination of ctnnb1 and its subsequent degradation by the proteasome. In the presence of Wnt ligand, ctnnb1 is not ubiquitinated and accumulates in the nucleus, where it acts as a coactivator for transcription factors of the TCF/LEF family, leading to activate Wnt responsive genes. Plays a key role in dorsoventral patterning: in prospective ventral blastomeres, its down-regulation by axin1 and axin2 leads to inhibit the Wnt signaling pathway, while in prospective dorsal blastomeres, degradation of axin results in stabilization and nuclear translocation of ctnnb1. The protein is Catenin beta-1 of Danio rerio (Zebrafish).